The following is a 354-amino-acid chain: Ferrochelatase (354 aa).

Fe cation-binding residues include histidine 214 and glutamate 295.

The protein belongs to the ferrochelatase family.

Its subcellular location is the cytoplasm. It catalyses the reaction heme b + 2 H(+) = protoporphyrin IX + Fe(2+). It functions in the pathway porphyrin-containing compound metabolism; protoheme biosynthesis; protoheme from protoporphyrin-IX: step 1/1. Catalyzes the ferrous insertion into protoporphyrin IX. The sequence is that of Ferrochelatase from Burkholderia orbicola (strain MC0-3).